A 378-amino-acid polypeptide reads, in one-letter code: Anhydro-N-acetylmuramic acid kinase (378 aa).

An ATP-binding site is contributed by 23–30 (GTSMDGAD).

The protein belongs to the anhydro-N-acetylmuramic acid kinase family.

The enzyme catalyses 1,6-anhydro-N-acetyl-beta-muramate + ATP + H2O = N-acetyl-D-muramate 6-phosphate + ADP + H(+). Its pathway is amino-sugar metabolism; 1,6-anhydro-N-acetylmuramate degradation. It functions in the pathway cell wall biogenesis; peptidoglycan recycling. Catalyzes the specific phosphorylation of 1,6-anhydro-N-acetylmuramic acid (anhMurNAc) with the simultaneous cleavage of the 1,6-anhydro ring, generating MurNAc-6-P. Is required for the utilization of anhMurNAc either imported from the medium or derived from its own cell wall murein, and thus plays a role in cell wall recycling. The sequence is that of Anhydro-N-acetylmuramic acid kinase from Bordetella bronchiseptica (strain ATCC BAA-588 / NCTC 13252 / RB50) (Alcaligenes bronchisepticus).